The primary structure comprises 324 residues: Elongation factor P--(R)-beta-lysine ligase (324 aa).

75-77 is a substrate binding site; it reads SPE. Residues 99 to 101 and asparagine 108 each bind ATP; that span reads RNK. Residue tyrosine 117 coordinates substrate. 243 to 244 contributes to the ATP binding site; it reads EL. Substrate is bound at residue glutamate 250. Glycine 299 lines the ATP pocket.

This sequence belongs to the class-II aminoacyl-tRNA synthetase family. EpmA subfamily. In terms of assembly, homodimer.

It catalyses the reaction D-beta-lysine + L-lysyl-[protein] + ATP = N(6)-((3R)-3,6-diaminohexanoyl)-L-lysyl-[protein] + AMP + diphosphate + H(+). With EpmB is involved in the beta-lysylation step of the post-translational modification of translation elongation factor P (EF-P). Catalyzes the ATP-dependent activation of (R)-beta-lysine produced by EpmB, forming a lysyl-adenylate, from which the beta-lysyl moiety is then transferred to the epsilon-amino group of a conserved specific lysine residue in EF-P. The protein is Elongation factor P--(R)-beta-lysine ligase of Buchnera aphidicola subsp. Acyrthosiphon pisum (strain 5A).